We begin with the raw amino-acid sequence, 300 residues long: Virginiamycin B lyase (300 aa).

His-231 is a binding site for substrate. Glu-270 lines the Mg(2+) pocket. His-272 serves as the catalytic Proton acceptor. Glu-287 lines the Mg(2+) pocket.

It belongs to the Vgb family. Monomer. Requires Mg(2+) as cofactor.

Functionally, inactivates the type B streptogramin antibiotics by linearizing the lactone ring at the ester linkage, generating a free phenylglycine carboxylate and converting the threonyl moiety into 2-amino-butenoic acid. In Saccharopolyspora erythraea (strain ATCC 11635 / DSM 40517 / JCM 4748 / NBRC 13426 / NCIMB 8594 / NRRL 2338), this protein is Virginiamycin B lyase.